Reading from the N-terminus, the 149-residue chain is Nucleoside diphosphate kinase (149 aa).

Residues Lys9, Phe57, Arg85, Thr91, Arg102, and Asn112 each contribute to the ATP site. The active-site Pros-phosphohistidine intermediate is the His115.

This sequence belongs to the NDK family. In terms of assembly, homotetramer. The cofactor is Mg(2+).

Its subcellular location is the cytoplasm. The enzyme catalyses a 2'-deoxyribonucleoside 5'-diphosphate + ATP = a 2'-deoxyribonucleoside 5'-triphosphate + ADP. It carries out the reaction a ribonucleoside 5'-diphosphate + ATP = a ribonucleoside 5'-triphosphate + ADP. Its function is as follows. Major role in the synthesis of nucleoside triphosphates other than ATP. The ATP gamma phosphate is transferred to the NDP beta phosphate via a ping-pong mechanism, using a phosphorylated active-site intermediate. The polypeptide is Nucleoside diphosphate kinase (Carboxydothermus hydrogenoformans (strain ATCC BAA-161 / DSM 6008 / Z-2901)).